We begin with the raw amino-acid sequence, 402 residues long: MNFARMENQDLSGKTVLIREDLNVPVQNGKISNDARLQSSLPTIKLALEKGAAVLVCSHLGRPTEGDYEEKYSLQPVADYLSEHLNQPVRLDKTYTEQEVTVAPGDVVLLENVRFNVGEKKNSDSLSQHYADLCDVFVMDAFGTAHRAQASTEGVIQAAAKAGKVVCAGPLLAAELDALDKALHKPKKPLVAIVGGSKVSTKLDVLISLAKICDQIIVGGGIANTFIAAQGHSVGASLYEAEMIDTAKQIMQQTDILLPKNVVVADKNQINFDDFLNSLESATPIHRSIEQVGEDEMILDIASEGAEHIFEAVKNAATILWNGPVGVFEVEAFSEGTRLLSEAVKDSAGFSIAGGGDTLAAIHKFNVEDGVSYMSTGGGAFLEFVEGKTLPAVAALEANHSK.

Substrate-binding positions include 21-23, Arg-36, 59-62, Arg-114, and Arg-147; these read DLN and HLGR. ATP contacts are provided by residues Lys-202, Glu-329, and 355-358; that span reads GGDT.

It belongs to the phosphoglycerate kinase family. Monomer.

Its subcellular location is the cytoplasm. It catalyses the reaction (2R)-3-phosphoglycerate + ATP = (2R)-3-phospho-glyceroyl phosphate + ADP. The protein operates within carbohydrate degradation; glycolysis; pyruvate from D-glyceraldehyde 3-phosphate: step 2/5. This is Phosphoglycerate kinase from Psychrobacter sp. (strain PRwf-1).